Consider the following 813-residue polypeptide: Origin of replication complex subunit 1B (813 aa).

Residues 1–109 (MASTPRAKTF…TPKKKKKIDS (109 aa)) form a disordered region. Residues 11 to 21 (KSPTKTPSNIY) are compositionally biased toward polar residues. Residues 27-41 (SPSSTSHTPQTPETH) are compositionally biased toward low complexity. A compositionally biased stretch (basic residues) spans 43 to 52 (PLRRSARHVS). A Nuclear localization signal motif is present at residues 83 to 90 (PRKPTTDV). The interval 163-187 (DPEIEDCQICFKSDTNIMIECDDCL) is histone H3 binding. The segment at 166 to 215 (IEDCQICFKSDTNIMIECDDCLGGFHLKCLKPPLKEVPEGDWICQFCEVK) adopts a PHD-type zinc-finger fold. The Zn(2+) site is built by cysteine 169, cysteine 172, cysteine 183, cysteine 186, histidine 191, and cysteine 194. The tract at residues 203–207 (PEGDW) is histone H3 binding. Zn(2+)-binding residues include cysteine 209 and cysteine 212. In terms of domain architecture, BAH spans 226–344 (PKPPEGKKLA…VHWRSFKRLA (119 aa)). A histone H3 binding region spans residues 319–324 (ASNDGD). The tract at residues 349–372 (GDSDSDQEWNGRKEEEVDDSDEEM) is disordered. Residues 436-803 (PKSLPCRSKE…DDVAFALKDN (368 aa)) are necessary and sufficient for ORC complex assembly. 471–479 (GVPGTGKTI) contacts ATP. The Mg(2+) site is built by aspartate 561 and glutamate 562. ATP-binding residues include glutamate 562, asparagine 595, and arginine 660.

This sequence belongs to the ORC1 family. In terms of assembly, component of the origin recognition complex (ORC) composed of at least ORC1 (ORC1A or ORC1B), ORC2, ORC3, ORC4, ORC5 and ORC6. ORC is regulated in a cell-cycle and development dependent manner. It is sequentially assembled at the exit from anaphase of mitosis and disassembled as cells enter S phase. Interacts directly with ORC2 and ORC5. Binds mostly unmodified histone H3, and, with lower efficiency, H3K4me1 H3K4me2 and H3K4me3. Follow a cell-cycle regulation with a peak at the G1/S-phase. Mostly expressed in flower buds, and, to a lower exent, in roots, leaves and stems.

It is found in the nucleus. Its function is as follows. Essential protein required for ovules fertilization. Component of the origin recognition complex (ORC) that binds origins of replication. It has a role in both chromosomal replication and mating type transcriptional silencing. Binds to the ARS consensus sequence (ACS) of origins of replication. H3K4me3 effector that positively regulates the transcription of a subset of genes. The chain is Origin of replication complex subunit 1B from Arabidopsis thaliana (Mouse-ear cress).